The chain runs to 358 residues: Peptide chain release factor 1 (358 aa).

At glutamine 233 the chain carries N5-methylglutamine.

Belongs to the prokaryotic/mitochondrial release factor family. In terms of processing, methylated by PrmC. Methylation increases the termination efficiency of RF1.

It localises to the cytoplasm. Its function is as follows. Peptide chain release factor 1 directs the termination of translation in response to the peptide chain termination codons UAG and UAA. The sequence is that of Peptide chain release factor 1 from Staphylococcus epidermidis (strain ATCC 35984 / DSM 28319 / BCRC 17069 / CCUG 31568 / BM 3577 / RP62A).